Here is a 255-residue protein sequence, read N- to C-terminus: 5'-nucleotidase SurE (255 aa).

Residues D8, D9, S40, and N93 each contribute to the a divalent metal cation site.

The protein belongs to the SurE nucleotidase family. Requires a divalent metal cation as cofactor.

It is found in the cytoplasm. It carries out the reaction a ribonucleoside 5'-phosphate + H2O = a ribonucleoside + phosphate. Functionally, nucleotidase that shows phosphatase activity on nucleoside 5'-monophosphates. This chain is 5'-nucleotidase SurE, found in Bradyrhizobium sp. (strain BTAi1 / ATCC BAA-1182).